Consider the following 367-residue polypeptide: uncharacterized protein (367 aa).

A disordered region spans residues arginine 333–serine 367. The span at alanine 341 to glutamine 351 shows a compositional bias: low complexity.

This is an uncharacterized protein from Amazona oratrix (yellow-headed parrot).